Here is a 273-residue protein sequence, read N- to C-terminus: Dermonecrotic toxin LruSicTox-alphaIC1c (273 aa).

Residue His-5 is part of the active site. Residues Glu-25 and Asp-27 each contribute to the Mg(2+) site. The active-site Nucleophile is the His-41. 2 disulfides stabilise this stretch: Cys-45–Cys-51 and Cys-47–Cys-190. Asp-85 provides a ligand contact to Mg(2+).

Belongs to the arthropod phospholipase D family. Class II subfamily. Requires Mg(2+) as cofactor. Expressed by the venom gland.

It localises to the secreted. The enzyme catalyses an N-(acyl)-sphingosylphosphocholine = an N-(acyl)-sphingosyl-1,3-cyclic phosphate + choline. It carries out the reaction an N-(acyl)-sphingosylphosphoethanolamine = an N-(acyl)-sphingosyl-1,3-cyclic phosphate + ethanolamine. It catalyses the reaction a 1-acyl-sn-glycero-3-phosphocholine = a 1-acyl-sn-glycero-2,3-cyclic phosphate + choline. The catalysed reaction is a 1-acyl-sn-glycero-3-phosphoethanolamine = a 1-acyl-sn-glycero-2,3-cyclic phosphate + ethanolamine. Functionally, dermonecrotic toxins cleave the phosphodiester linkage between the phosphate and headgroup of certain phospholipids (sphingolipid and lysolipid substrates), forming an alcohol (often choline) and a cyclic phosphate. This toxin acts on sphingomyelin (SM). It may also act on ceramide phosphoethanolamine (CPE), lysophosphatidylcholine (LPC) and lysophosphatidylethanolamine (LPE), but not on lysophosphatidylserine (LPS), and lysophosphatidylglycerol (LPG). It acts by transphosphatidylation, releasing exclusively cyclic phosphate products as second products. Induces dermonecrosis, hemolysis, increased vascular permeability, edema, inflammatory response, and platelet aggregation. The chain is Dermonecrotic toxin LruSicTox-alphaIC1c from Loxosceles rufescens (Mediterranean recluse spider).